The sequence spans 549 residues: Undecaprenyl phosphate-alpha-4-amino-4-deoxy-L-arabinose arabinosyl transferase (549 aa).

12 consecutive transmembrane segments (helical) span residues 9 to 29 (LLLIAFGLFYLVPLSNHGLWI), 80 to 100 (LFGVRIASVVATALSVLLAYL), 112 to 132 (SLACALLYASFGLIAGQSGYA), 133 to 153 (NLDPQFTFWVNLSLVALWHAL), 176 to 196 (FLTKGFLAWLLPVLVALPYML), 204 to 224 (LLGYGALAVLAALLVCLPWAL), 256 to 276 (PWWFYLPLLAVSCLPWSGLLP), 288 to 308 (QAPVVFLALWLLLPLAFFSLS), 312 to 332 (LPTYIMPCLLPLALLMGHALV), 346 to 366 (NGLLNLGLALLALAALAYLQL), 376 to 396 (FELFLVLLVIGAWAAAGLAQW), and 402 to 422 (AWAAPLLASWVLIALLPAAMP).

The protein belongs to the glycosyltransferase 83 family.

It is found in the cell inner membrane. It carries out the reaction 4-amino-4-deoxy-alpha-L-arabinopyranosyl di-trans,octa-cis-undecaprenyl phosphate + lipid IVA = lipid IIA + di-trans,octa-cis-undecaprenyl phosphate.. Its pathway is lipopolysaccharide metabolism; 4-amino-4-deoxy-beta-L-arabinose-lipid A biosynthesis. In terms of biological role, catalyzes the transfer of the L-Ara4N moiety of the glycolipid undecaprenyl phosphate-alpha-L-Ara4N to lipid A. The modified arabinose is attached to lipid A and is required for resistance to polymyxin and cationic antimicrobial peptides. This chain is Undecaprenyl phosphate-alpha-4-amino-4-deoxy-L-arabinose arabinosyl transferase, found in Pseudomonas aeruginosa (strain LESB58).